The chain runs to 178 residues: MQKPINENFFIAQIGRTVGLWGDLKLHLHTDFPEQFKVGNSYQSNRGELTISDINFKRGTIRFQGYESIDAAKKLTNTKLYADEAQTKEQCPLEEGQHFWFNVIGCTVNQGDELLGVVDDIQRLADVDYLSIKTDKALVDTGLPKNFLVPYIDRYVINTDEKSKIVHVKDAKDILEAS.

The PRC barrel domain occupies 95–174 (EGQHFWFNVI…IVHVKDAKDI (80 aa)).

It belongs to the RimM family. In terms of assembly, binds ribosomal protein uS19.

The protein localises to the cytoplasm. Functionally, an accessory protein needed during the final step in the assembly of 30S ribosomal subunit, possibly for assembly of the head region. Essential for efficient processing of 16S rRNA. May be needed both before and after RbfA during the maturation of 16S rRNA. It has affinity for free ribosomal 30S subunits but not for 70S ribosomes. The chain is Ribosome maturation factor RimM from Sulfurovum sp. (strain NBC37-1).